A 341-amino-acid polypeptide reads, in one-letter code: uncharacterized protein (341 aa).

The protein belongs to the Gfo/Idh/MocA family.

This is an uncharacterized protein from Bacillus subtilis (strain 168).